The chain runs to 142 residues: Semaphorin-like protein VACWR164 (142 aa).

A Sema domain is found at 1 to 142; the sequence is MNTIKQSFST…MPQMKKILKM (142 aa).

This sequence belongs to the semaphorin family.

The chain is Semaphorin-like protein VACWR164 from Bos taurus (Bovine).